The sequence spans 405 residues: Acetate kinase (405 aa).

A Mg(2+)-binding site is contributed by Asn-7. ATP is bound at residue Lys-14. A substrate-binding site is contributed by Arg-91. The active-site Proton donor/acceptor is Asp-148. ATP is bound by residues 208 to 212 (HLGNG) and 283 to 285 (DFR). A Mg(2+)-binding site is contributed by Glu-384.

The protein belongs to the acetokinase family. As to quaternary structure, homodimer. It depends on Mg(2+) as a cofactor. Mn(2+) is required as a cofactor.

Its subcellular location is the cytoplasm. The enzyme catalyses acetate + ATP = acetyl phosphate + ADP. Its pathway is metabolic intermediate biosynthesis; acetyl-CoA biosynthesis; acetyl-CoA from acetate: step 1/2. Functionally, catalyzes the formation of acetyl phosphate from acetate and ATP. Can also catalyze the reverse reaction. The polypeptide is Acetate kinase (Dictyoglomus turgidum (strain DSM 6724 / Z-1310)).